A 1620-amino-acid polypeptide reads, in one-letter code: DNA (cytosine-5)-methyltransferase 1 (1620 aa).

Residues 1 to 21 form a disordered region; that stretch reads MPARTAPARVPALASPAGSLP. The interaction with DMAP1 stretch occupies residues 1–120; that stretch reads MPARTAPARV…SRPTWRAEMA (120 aa). Positions 1–145 are interaction with DNMT3A; sequence MPARTAPARV…RRSKSDSDTL (145 aa). Interaction with the PRC2/EED-EZH2 complex regions lie at residues 1 to 343 and 305 to 609; these read MPAR…SERK and APET…RVMG. Serine 15 carries the phosphoserine modification. Residues 16–109 form the DMAP1-binding domain; the sequence is PAGSLPDHVR…TQKANGCPAN (94 aa). Residue lysine 70 is modified to N6,N6-dimethyllysine; by EHMT2. Residues 96 to 369 form a disordered region; the sequence is THTLTQKANG…PECGQHLDDP (274 aa). Basic residues predominate over residues 126–137; sequence PRSRPKPRGPRR. Phosphoserine is present on serine 138. N6-methyllysine; by SETD7 is present on lysine 139. Serine 140 bears the Phosphoserine mark. Residues 144–155 show a composition bias toward polar residues; that stretch reads TLSVETSPSSVA. A Phosphoserine; by CK1 modification is found at serine 146. Positions 147–217 are interaction with DNMT3B; it reads VETSPSSVAT…SGAAAAVEKL (71 aa). Phosphoserine is present on residues serine 150 and serine 152. An interaction with PCNA region spans residues 161–172; the sequence is RQTTITAHFTKG. Phosphothreonine is present on threonine 164. An N6-acetyllysine modification is found at lysine 171. The Nuclear localization signal motif lies at 175-202; the sequence is KRKPKEESEEGNSAESAAEERDQDKKRR. The span at 192–205 shows a compositional bias: basic and acidic residues; the sequence is AEERDQDKKRRVVD. Serine 240 is modified (phosphoserine). 2 stretches are compositionally biased toward basic and acidic residues: residues 246–267 and 286–300; these read RELS…PETH and QPRD…KEAE. Lysine 255 is modified (N6-acetyllysine; alternate). Lysine 255 participates in a covalent cross-link: Glycyl lysine isopeptide (Lys-Gly) (interchain with G-Cter in SUMO2); alternate. The segment covering 308-317 has biased composition (acidic residues); that stretch reads TPEDRDEDER. The segment at 328–556 is DNA replication foci-targeting sequence; it reads KLESHTVPVQ…NVNRFTEDSL (229 aa). Residues cysteine 359 and cysteine 362 each contribute to the Zn(2+) site. Lysine 372 bears the N6-acetyllysine mark. Residues cysteine 420 and histidine 424 each coordinate Zn(2+). A phosphoserine mark is found at serine 515 and serine 555. Residues 649–695 form a CXXC-type zinc finger; it reads NAMKRRRCGVCEVCQQPECGKCKACKDMVKFGGTGRSKQACLKRRCP. Zn(2+) contacts are provided by cysteine 656, cysteine 659, cysteine 662, cysteine 667, cysteine 670, cysteine 673, cysteine 689, and cysteine 694. Positions 696–757 are autoinhibitory linker; it reads NLAVKEADDD…TYYQKVSIDE (62 aa). Positions 696-813 are interaction with HDAC1; sequence NLAVKEADDD…TDTVLGATSD (118 aa). The span at 702-713 shows a compositional bias: acidic residues; that stretch reads ADDDEEADDDVS. The interval 702-732 is disordered; the sequence is ADDDEEADDDVSEMPSPKKLHQGKKKKQNKD. Phosphoserine is present on residues serine 713 and serine 717. A compositionally biased stretch (basic residues) spans 719–730; sequence KKLHQGKKKKQN. Phosphoserine is present on serine 735. N6-acetyllysine is present on lysine 752. The BAH 1 domain maps to 758 to 884; it reads EMLEVGDCVS…QEYARFESPP (127 aa). Serine 882 is subject to Phosphoserine. N6-acetyllysine is present on residues lysine 895, lysine 961, lysine 965, and lysine 979. The 128-residue stretch at 976–1103 folds into the BAH 2 domain; it reads HYRKYSDYIK…SKTKNFEDPP (128 aa). The segment at 1097–1136 is disordered; that stretch reads KNFEDPPNHARSPGNKGKGKGKGKGKGKHQVSEPKEPEAA. Repeat copies occupy residues 1112–1113, 1114–1115, 1116–1117, 1118–1119, 1120–1121, and 1122–1123. Positions 1112–1125 are 7 X 2 AA tandem repeats of K-G; it reads KGKGKGKGKGKGKH. Residues 1113 to 1125 are compositionally biased toward basic residues; it reads GKGKGKGKGKGKH. Residues lysine 1114, lysine 1116, lysine 1118, lysine 1120, lysine 1122, and lysine 1124 each carry the N6-acetyllysine modification. The 7; approximate repeat unit spans residues 1124-1125; sequence KH. Residues 1124 to 1620 are interaction with the PRC2/EED-EZH2 complex; sequence KHQVSEPKEP…KAKEEAATKD (497 aa). The span at 1126-1135 shows a compositional bias: basic and acidic residues; the sequence is QVSEPKEPEA. The 460-residue stretch at 1142-1601 folds into the SAM-dependent MTase C5-type domain; that stretch reads LRTLDVFSGC…LEIKLCLLSS (460 aa). Residues 1142–1620 form a catalytic region; sequence LRTLDVFSGC…KAKEEAATKD (479 aa). S-adenosyl-L-methionine is bound by residues serine 1149, 1153–1154, 1171–1172, and 1193–1194; these read GL, EM, and DC. Residue cysteine 1229 is part of the active site. N6-acetyllysine is present on residues lysine 1352 and lysine 1418. Valine 1582 is an S-adenosyl-L-methionine binding site. A Glycyl lysine isopeptide (Lys-Gly) (interchain with G-Cter in SUMO2) cross-link involves residue lysine 1611.

The protein belongs to the class I-like SAM-binding methyltransferase superfamily. C5-methyltransferase family. Homodimer. Forms a stable complex with E2F1, BB1 and HDAC1. Forms a complex with DMAP1 and HDAC2, with direct interaction. Interacts with the PRC2/EED-EZH2 complex. Probably part of a corepressor complex containing ZNF304, TRIM28, SETDB1 and DNMT1. Interacts with UHRF1; promoting its recruitment to hemimethylated DNA. Interacts with USP7, promoting its deubiquitination. Interacts with BAZ2A/TIP5. Interacts with PCNA. Interacts with MBD2 and MBD3. Interacts with DNMT3A and DNMT3B. Interacts with UBC9. Interacts with HDAC1. Interacts with CSNK1D. Interacts with SIRT7. Interacts with ZNF263; recruited to the SIX3 promoter along with other proteins involved in chromatin modification and transcriptional corepression where it contributes to transcriptional repression. Interacts with L3MBTL3 and DCAF5; the interaction requires DNMT1 methylation at Lys-139 and is necessary to target DNMT1 for ubiquitination by the CRL4-DCAF5 E3 ubiquitin ligase complex and proteasomal degradation. Interacts with PHF20L1; the interaction requires DNMT1 methylation at Lys-139 and protects DNMT1 from ubiquitination and proteasomal degradation. In terms of processing, sumoylated; sumoylation increases activity. Post-translationally, phosphorylation at Ser-146 by CK1 reduces DNA-binding activity. Acetylation on multiple lysines, mainly by KAT2B/PCAF, regulates cell cycle G(2)/M transition. Deacetylation of Lys-1352 and Lys-1418 by SIRT1 increases methyltransferase activity. In terms of processing, phosphorylation of Ser-152 by CDKs is important for enzymatic activity and protein stability. Phosphorylation of Ser-140 by AKT1 prevents methylation by SETD7 thereby increasing DNMT1 stability. Post-translationally, methylation at Lys-139 by SETD7 is necessary for the regulation of DNMT1 proteasomal degradation. Ubiquitinated by UHRF1; interaction with USP7 counteracts ubiquitination by UHRF1 by promoting deubiquitination and preventing degradation by the proteasome. As to expression, isoform 1 is expressed in embryonic stem cells and in somatic tissues. Isoform 2 is expressed in oocytes, preimplantation embryos, testis and in skeletal muscle during myogenesis.

The protein localises to the nucleus. It is found in the cytoplasm. It catalyses the reaction a 2'-deoxycytidine in DNA + S-adenosyl-L-methionine = a 5-methyl-2'-deoxycytidine in DNA + S-adenosyl-L-homocysteine + H(+). Allosterically regulated. The binding of 5-methylcytosine-containing DNA to the N-terminal parts of DNMT1 causes an allosteric activation of the catalytic domain by a direct interaction of its Zn-binding domain with the catalytic domain. Functionally, methylates CpG residues. Preferentially methylates hemimethylated DNA. Associates with DNA replication sites in S phase maintaining the methylation pattern in the newly synthesized strand, that is essential for epigenetic inheritance. Associates with chromatin during G2 and M phases to maintain DNA methylation independently of replication. It is responsible for maintaining methylation patterns established in development. DNA methylation is coordinated with methylation of histones. Mediates transcriptional repression by direct binding to HDAC2. In association with DNMT3B and via the recruitment of CTCFL/BORIS, involved in activation of BAG1 gene expression by modulating dimethylation of promoter histone H3 at H3K4 and H3K9. Probably forms a corepressor complex required for activated KRAS-mediated promoter hypermethylation and transcriptional silencing of tumor suppressor genes (TSGs) or other tumor-related genes in colorectal cancer (CRC) cells. Also required to maintain a transcriptionally repressive state of genes in undifferentiated embryonic stem cells (ESCs). Associates at promoter regions of tumor suppressor genes (TSGs) leading to their gene silencing. Promotes tumor growth. In Mus musculus (Mouse), this protein is DNA (cytosine-5)-methyltransferase 1 (Dnmt1).